The sequence spans 354 residues: UDP-3-O-acylglucosamine N-acyltransferase (354 aa).

Histidine 247 (proton acceptor) is an active-site residue.

It belongs to the transferase hexapeptide repeat family. LpxD subfamily. In terms of assembly, homotrimer.

The enzyme catalyses a UDP-3-O-[(3R)-3-hydroxyacyl]-alpha-D-glucosamine + a (3R)-hydroxyacyl-[ACP] = a UDP-2-N,3-O-bis[(3R)-3-hydroxyacyl]-alpha-D-glucosamine + holo-[ACP] + H(+). It functions in the pathway bacterial outer membrane biogenesis; LPS lipid A biosynthesis. In terms of biological role, catalyzes the N-acylation of UDP-3-O-acylglucosamine using 3-hydroxyacyl-ACP as the acyl donor. Is involved in the biosynthesis of lipid A, a phosphorylated glycolipid that anchors the lipopolysaccharide to the outer membrane of the cell. This chain is UDP-3-O-acylglucosamine N-acyltransferase, found in Chlamydia trachomatis serovar A (strain ATCC VR-571B / DSM 19440 / HAR-13).